A 360-amino-acid polypeptide reads, in one-letter code: 3-dehydroquinate synthase (360 aa).

Residues 71-76 (DGEQYK), 105-109 (GVIGD), 129-130 (TT), K142, K151, and 169-172 (CLDT) contribute to the NAD(+) site. Zn(2+) is bound by residues E184, H247, and H264.

This sequence belongs to the sugar phosphate cyclases superfamily. Dehydroquinate synthase family. It depends on Co(2+) as a cofactor. The cofactor is Zn(2+). NAD(+) serves as cofactor.

It is found in the cytoplasm. The catalysed reaction is 7-phospho-2-dehydro-3-deoxy-D-arabino-heptonate = 3-dehydroquinate + phosphate. It functions in the pathway metabolic intermediate biosynthesis; chorismate biosynthesis; chorismate from D-erythrose 4-phosphate and phosphoenolpyruvate: step 2/7. In terms of biological role, catalyzes the conversion of 3-deoxy-D-arabino-heptulosonate 7-phosphate (DAHP) to dehydroquinate (DHQ). This chain is 3-dehydroquinate synthase, found in Erwinia tasmaniensis (strain DSM 17950 / CFBP 7177 / CIP 109463 / NCPPB 4357 / Et1/99).